A 1134-amino-acid polypeptide reads, in one-letter code: RNA-binding protein NAB6 (1134 aa).

N-acetylserine is present on Ser2. 3 disordered regions span residues 112–133 (RPVS…NTNN), 151–173 (RNNN…RNNS), and 464–491 (SVPS…SGIT). 2 stretches are compositionally biased toward low complexity: residues 115–133 (SNHN…NTNN) and 151–164 (RNNN…HNNN). 2 positions are modified to phosphoserine: Ser464 and Ser467. Positions 471–489 (GNNNDSNNNGNNNKSNMSG) are enriched in low complexity. The RRM domain occupies 653–726 (RTIYIGNINP…NMLRVGWGHY (74 aa)). Disordered stretches follow at residues 918-959 (LDAH…FGGL) and 1043-1092 (NYRS…GSFA). Over residues 1057 to 1081 (STLSYNHSKNNETPMQDIFTNGETA) the composition is skewed to polar residues. The span at 1083–1092 (NRKKKRGSFA) shows a compositional bias: basic residues.

Its subcellular location is the cytoplasm. Its function is as follows. RNA-binding protein that associates with mRNAs encoding cell wall proteins. This Saccharomyces cerevisiae (strain ATCC 204508 / S288c) (Baker's yeast) protein is RNA-binding protein NAB6 (NAB6).